Here is a 390-residue protein sequence, read N- to C-terminus: Galactokinase (390 aa).

33–36 is a substrate binding site; the sequence is EHTD. ATP contacts are provided by residues serine 67 and 124-130; that span reads GAGLSSS. Mg(2+) is bound by residues serine 130 and glutamate 162. Catalysis depends on aspartate 174, which acts as the Proton acceptor. Tyrosine 224 contacts substrate.

Belongs to the GHMP kinase family. GalK subfamily.

Its subcellular location is the cytoplasm. The enzyme catalyses alpha-D-galactose + ATP = alpha-D-galactose 1-phosphate + ADP + H(+). It functions in the pathway carbohydrate metabolism; galactose metabolism. Its function is as follows. Catalyzes the transfer of the gamma-phosphate of ATP to D-galactose to form alpha-D-galactose-1-phosphate (Gal-1-P). This Bacillus subtilis (strain 168) protein is Galactokinase.